A 134-amino-acid chain; its full sequence is Arsenate reductase (134 aa).

Residues C11, C83, and C90 each act as nucleophile in the active site. Cystine bridges form between C11/C83 and C83/C90.

This sequence belongs to the low molecular weight phosphotyrosine protein phosphatase family. Thioredoxin-coupled ArsC subfamily.

Its subcellular location is the cytoplasm. The enzyme catalyses arsenate + [thioredoxin]-dithiol + H(+) = arsenite + [thioredoxin]-disulfide + H2O. Functionally, catalyzes the reduction of arsenate [As(V)] to arsenite [As(III)]. This is Arsenate reductase from Bacillus cereus (strain AH187).